The chain runs to 192 residues: Group XIIA secretory phospholipase A2 (192 aa).

Positions 1–25 (MVTPRPAPARSPALLLLLLLATARG) are cleaved as a signal peptide. Gly91, Pro93, and Phe95 together coordinate Ca(2+). Residue His113 is part of the active site. Asp114 contributes to the Ca(2+) binding site. The active site involves Asp128.

Belongs to the phospholipase A2 family. Ca(2+) serves as cofactor.

Its subcellular location is the secreted. It is found in the cytoplasm. It carries out the reaction a 1,2-diacyl-sn-glycero-3-phosphocholine + H2O = a 1-acyl-sn-glycero-3-phosphocholine + a fatty acid + H(+). Its function is as follows. PA2 catalyzes the calcium-dependent hydrolysis of the 2-acyl groups in 3-sn-phosphoglycerides. Does not exhibit detectable activity toward sn-2-arachidonoyl- or linoleoyl-phosphatidylcholine or -phosphatidylethanolamine. The chain is Group XIIA secretory phospholipase A2 (Pla2g12a) from Mus musculus (Mouse).